Reading from the N-terminus, the 168-residue chain is Photosystem I assembly protein Ycf3 (168 aa).

TPR repeat units follow at residues A35–P68, S72–L105, and G120–N153.

Belongs to the Ycf3 family.

It is found in the plastid. The protein localises to the chloroplast thylakoid membrane. In terms of biological role, essential for the assembly of the photosystem I (PSI) complex. May act as a chaperone-like factor to guide the assembly of the PSI subunits. The sequence is that of Photosystem I assembly protein Ycf3 from Panax ginseng (Korean ginseng).